Here is a 126-residue protein sequence, read N- to C-terminus: RutC family protein SSO3206 (126 aa).

It belongs to the RutC family.

The sequence is that of RutC family protein SSO3206 from Saccharolobus solfataricus (strain ATCC 35092 / DSM 1617 / JCM 11322 / P2) (Sulfolobus solfataricus).